The sequence spans 227 residues: Probable septum site-determining protein MinC (227 aa).

It belongs to the MinC family. As to quaternary structure, interacts with MinD and FtsZ.

Functionally, cell division inhibitor that blocks the formation of polar Z ring septums. Rapidly oscillates between the poles of the cell to destabilize FtsZ filaments that have formed before they mature into polar Z rings. Prevents FtsZ polymerization. The sequence is that of Probable septum site-determining protein MinC from Acetivibrio thermocellus (strain ATCC 27405 / DSM 1237 / JCM 9322 / NBRC 103400 / NCIMB 10682 / NRRL B-4536 / VPI 7372) (Clostridium thermocellum).